The sequence spans 366 residues: 1-deoxy-D-xylulose 5-phosphate reductoisomerase (366 aa).

NADPH is bound by residues T7, G8, S9, I10, G31, N33, and N111. Residue K112 participates in 1-deoxy-D-xylulose 5-phosphate binding. E113 lines the NADPH pocket. Residue D131 participates in Mn(2+) binding. Residues S132, E133, S162, and H185 each coordinate 1-deoxy-D-xylulose 5-phosphate. Position 133 (E133) interacts with Mn(2+). NADPH is bound at residue G191. Positions 198, 203, 204, and 207 each coordinate 1-deoxy-D-xylulose 5-phosphate. E207 is a binding site for Mn(2+).

It belongs to the DXR family. Mg(2+) serves as cofactor. Requires Mn(2+) as cofactor.

It catalyses the reaction 2-C-methyl-D-erythritol 4-phosphate + NADP(+) = 1-deoxy-D-xylulose 5-phosphate + NADPH + H(+). Its pathway is isoprenoid biosynthesis; isopentenyl diphosphate biosynthesis via DXP pathway; isopentenyl diphosphate from 1-deoxy-D-xylulose 5-phosphate: step 1/6. Functionally, catalyzes the NADPH-dependent rearrangement and reduction of 1-deoxy-D-xylulose-5-phosphate (DXP) to 2-C-methyl-D-erythritol 4-phosphate (MEP). This is 1-deoxy-D-xylulose 5-phosphate reductoisomerase from Nautilia profundicola (strain ATCC BAA-1463 / DSM 18972 / AmH).